A 638-amino-acid polypeptide reads, in one-letter code: Paramyosin (638 aa).

A coiled-coil region spans residues 1 to 638; that stretch reads FSPSTTRLES…EGDISVMQAD (638 aa).

The protein belongs to the paramyosin family. As to quaternary structure, homodimer.

Its subcellular location is the cytoplasm. It localises to the myofibril. Its function is as follows. Paramyosin is a major structural component of many thick filaments isolated from invertebrate muscles. The chain is Paramyosin from Opisthorchis felineus.